The chain runs to 107 residues: Integration host factor subunit beta (107 aa).

Over residues 82-101 (PGKELRERVDRRAGEPLKAE) the composition is skewed to basic and acidic residues. The tract at residues 82–107 (PGKELRERVDRRAGEPLKAEDPDDDL) is disordered.

This sequence belongs to the bacterial histone-like protein family. In terms of assembly, heterodimer of an alpha and a beta chain.

In terms of biological role, this protein is one of the two subunits of integration host factor, a specific DNA-binding protein that functions in genetic recombination as well as in transcriptional and translational control. The polypeptide is Integration host factor subunit beta (Paraburkholderia xenovorans (strain LB400)).